The sequence spans 186 residues: Putative adenylate kinase (186 aa).

ATP-binding residues include glycine 10, glycine 12, lysine 13, threonine 14, and serine 15. Residues 30-53 (HLNELIKEEHLYTEVDEKRDSVVA) form an NMP region. The segment at 108 to 118 (KRGYSEEKVNE) is LID. Arginine 109 is an ATP binding site.

Belongs to the adenylate kinase family. AK6 subfamily. In terms of assembly, interacts with uS11. Not a structural component of 40S pre-ribosomes, but transiently interacts with them by binding to uS11.

It carries out the reaction AMP + ATP = 2 ADP. The enzyme catalyses ATP + H2O = ADP + phosphate + H(+). Broad-specificity nucleoside monophosphate (NMP) kinase that catalyzes the reversible transfer of the terminal phosphate group between nucleoside triphosphates and monophosphates. Also has ATPase activity. Involved in the late maturation steps of the 30S ribosomal particles, specifically 16S rRNA maturation. While NMP activity is not required for ribosome maturation, ATPase activity is. Associates transiently with small ribosomal subunit protein uS11. ATP hydrolysis breaks the interaction with uS11. May temporarily remove uS11 from the ribosome to enable a conformational change of the ribosomal RNA that is needed for the final maturation step of the small ribosomal subunit. This chain is Putative adenylate kinase, found in Methanosarcina acetivorans (strain ATCC 35395 / DSM 2834 / JCM 12185 / C2A).